The sequence spans 61 residues: APATYAIDPTHTFATFEIDHNGASTNRVRFKSGTVEFDRXAKAETNGGDFEARIDRNAFGV.

This sequence belongs to the UPF0312 family.

The sequence is that of UPF0312 protein from Delftia acidovorans (Pseudomonas acidovorans).